The following is a 327-amino-acid chain: Lipoyl synthase (327 aa).

The [4Fe-4S] cluster site is built by C75, C80, C86, C101, C105, C108, and S315. In terms of domain architecture, Radical SAM core spans 87–304; that stretch reads FGNGTATFMI…EEEAYKMGFS (218 aa).

This sequence belongs to the radical SAM superfamily. Lipoyl synthase family. It depends on [4Fe-4S] cluster as a cofactor.

The protein localises to the cytoplasm. The enzyme catalyses [[Fe-S] cluster scaffold protein carrying a second [4Fe-4S](2+) cluster] + N(6)-octanoyl-L-lysyl-[protein] + 2 oxidized [2Fe-2S]-[ferredoxin] + 2 S-adenosyl-L-methionine + 4 H(+) = [[Fe-S] cluster scaffold protein] + N(6)-[(R)-dihydrolipoyl]-L-lysyl-[protein] + 4 Fe(3+) + 2 hydrogen sulfide + 2 5'-deoxyadenosine + 2 L-methionine + 2 reduced [2Fe-2S]-[ferredoxin]. It participates in protein modification; protein lipoylation via endogenous pathway; protein N(6)-(lipoyl)lysine from octanoyl-[acyl-carrier-protein]: step 2/2. In terms of biological role, catalyzes the radical-mediated insertion of two sulfur atoms into the C-6 and C-8 positions of the octanoyl moiety bound to the lipoyl domains of lipoate-dependent enzymes, thereby converting the octanoylated domains into lipoylated derivatives. This is Lipoyl synthase from Variovorax paradoxus (strain S110).